The following is a 155-amino-acid chain: MPKGTGKVIAQNKKAFHDYFIEETYEAGLVLQGTEIKSIRAGRVNLKDAFARVHNGEVWVHNMHINTYEQGNRFNHDPLRTRKLLLHKKEIDKLAGAAKETGYALVPLRIYLKNGFAKMALGLAKGKKQYDKRHDLKEKEAKREIARAFRDRQKM.

It belongs to the SmpB family.

Its subcellular location is the cytoplasm. Functionally, required for rescue of stalled ribosomes mediated by trans-translation. Binds to transfer-messenger RNA (tmRNA), required for stable association of tmRNA with ribosomes. tmRNA and SmpB together mimic tRNA shape, replacing the anticodon stem-loop with SmpB. tmRNA is encoded by the ssrA gene; the 2 termini fold to resemble tRNA(Ala) and it encodes a 'tag peptide', a short internal open reading frame. During trans-translation Ala-aminoacylated tmRNA acts like a tRNA, entering the A-site of stalled ribosomes, displacing the stalled mRNA. The ribosome then switches to translate the ORF on the tmRNA; the nascent peptide is terminated with the 'tag peptide' encoded by the tmRNA and targeted for degradation. The ribosome is freed to recommence translation, which seems to be the essential function of trans-translation. This Bacillus cereus (strain B4264) protein is SsrA-binding protein.